Reading from the N-terminus, the 549-residue chain is Glucose-6-phosphate isomerase (549 aa).

Residue Glu-353 is the Proton donor of the active site. Residues His-384 and Lys-513 contribute to the active site.

Belongs to the GPI family.

It is found in the cytoplasm. It catalyses the reaction alpha-D-glucose 6-phosphate = beta-D-fructose 6-phosphate. It participates in carbohydrate biosynthesis; gluconeogenesis. The protein operates within carbohydrate degradation; glycolysis; D-glyceraldehyde 3-phosphate and glycerone phosphate from D-glucose: step 2/4. Catalyzes the reversible isomerization of glucose-6-phosphate to fructose-6-phosphate. This chain is Glucose-6-phosphate isomerase, found in Brucella ovis (strain ATCC 25840 / 63/290 / NCTC 10512).